A 101-amino-acid polypeptide reads, in one-letter code: Small ribosomal subunit protein uS14 (101 aa).

It belongs to the universal ribosomal protein uS14 family. Part of the 30S ribosomal subunit. Contacts proteins S3 and S10.

In terms of biological role, binds 16S rRNA, required for the assembly of 30S particles and may also be responsible for determining the conformation of the 16S rRNA at the A site. The polypeptide is Small ribosomal subunit protein uS14 (Haemophilus influenzae (strain PittGG)).